Here is a 576-residue protein sequence, read N- to C-terminus: Nuclear protein localization protein 4 homolog (576 aa).

Disordered stretches follow at residues 67–96 (LHLV…NNIS) and 200–219 (QDDN…IKKS). A compositionally biased stretch (low complexity) spans 72–94 (NNNNNNNDNKASSGSNNNNNNNN). Residues 208-218 (KDNKDNSEIKK) are compositionally biased toward basic and acidic residues. Residues 295–430 (GALVDFQSAN…MEAFQVSDQA (136 aa)) enclose the MPN domain.

Belongs to the NPL4 family.

The protein operates within protein degradation; proteasomal ubiquitin-dependent pathway. Functionally, may be part of a complex that binds ubiquitinated proteins and that is necessary for the export of misfolded proteins from the ER to the cytoplasm, where they are degraded by the proteasome. The protein is Nuclear protein localization protein 4 homolog (nploc4) of Dictyostelium discoideum (Social amoeba).